A 521-amino-acid polypeptide reads, in one-letter code: Runt-related transcription factor 2 (521 aa).

2 disordered regions span residues 18–59 and 222–340; these read FWDP…QQQQ and DGPR…RRIS. 2 stretches are compositionally biased toward low complexity: residues 21-33 and 47-59; these read PSTSRRFSPPSSS and AAQQQQQQQQQQQ. Residues 101–229 enclose the Runt domain; the sequence is TMVEIIADHP…TVDGPREPRR (129 aa). Lysine 238 participates in a covalent cross-link: Glycyl lysine isopeptide (Lys-Gly) (interchain with G-Cter in SUMO2). Residues 242–258 are required for interaction with FOXO1; sequence FSDRLSDLGRIPHPSMR. The residue at position 267 (arginine 267) is an Asymmetric dimethylarginine. The span at 267-326 shows a compositional bias: polar residues; sequence RPSLNSAPSPFNPQGQSQITDPRQAQSSPPWSYDQSYPSYLSQMTSPSIHSTTPLSSTRG. The tract at residues 336–439 is interaction with KAT6A; the sequence is PRRISDDDTA…SQSQSGPFQT (104 aa). Serine 340 carries the post-translational modification Phosphoserine. The tract at residues 374-468 is interaction with KAT6B; that stretch reads RQFPSISSLT…VPGGDRSPSR (95 aa). Serine 451 bears the Phosphoserine; by CDK1 mark. The segment at 460–521 is disordered; sequence PGGDRSPSRM…RMDESVWRPY (62 aa). 2 stretches are compositionally biased toward polar residues: residues 473-492 and 499-511; these read CTTTSNGSTLLNPNLPNQND and SHSSSPTVLNSSG. Basic and acidic residues predominate over residues 512 to 521; that stretch reads RMDESVWRPY.

In terms of assembly, heterodimer of an alpha and a beta subunit. The alpha subunit binds DNA as a monomer and through the Runt domain. DNA-binding is increased by heterodimerization. Interacts with XRCC6 (Ku70) and XRCC5 (Ku80). Interacts with HIVEP3. Interacts with IFI204. Interaction with SATB2; the interaction results in enhanced DNA binding and transactivation by these transcription factors. Binds to HIPK3. Interacts with FOXO1 (via a C-terminal region); the interaction inhibits RUNX2 transcriptional activity towards BGLAP. This interaction is prevented on insulin or IGF1 stimulation as FOXO1 is exported from the nucleus. Interacts with CCNB1, KAT6A and KAT6B. Interacts with FOXP3. Interacts with TMEM119. Interacts with OLFM2. Interacts with IPO7; the interaction inhibits RUNX2 nuclear translocation in osteoblasts. As to quaternary structure, interacts with DDX5. Post-translationally, phosphorylated; probably by MAP kinases (MAPK). Phosphorylation by HIPK3 is required for the SPEN/MINT and FGF2 transactivation during osteoblastic differentiation. Phosphorylation at Ser-451 by CDK1 promotes endothelial cell proliferation required for tumor angiogenesis probably by facilitating cell cycle progression. Isoform 3 is phosphorylated on Ser-340. In terms of tissue distribution, specifically expressed in osteoblasts.

The protein localises to the nucleus. It localises to the cytoplasm. Its function is as follows. Transcription factor involved in osteoblastic differentiation and skeletal morphogenesis. Essential for the maturation of osteoblasts and both intramembranous and endochondral ossification. CBF binds to the core site, 5'-PYGPYGGT-3', of a number of enhancers and promoters, including murine leukemia virus, polyomavirus enhancer, T-cell receptor enhancers, osteocalcin, osteopontin, bone sialoprotein, alpha 1(I) collagen, LCK, IL-3 and GM-CSF promoters. In osteoblasts, supports transcription activation: synergizes with SPEN/MINT to enhance FGFR2-mediated activation of the osteocalcin FGF-responsive element (OCFRE). Inhibits KAT6B-dependent transcriptional activation. This chain is Runt-related transcription factor 2 (RUNX2), found in Homo sapiens (Human).